A 63-amino-acid polypeptide reads, in one-letter code: MKANELREKSVEQLNEQLLGLLRDQFNLRMQKATGQLGQSHLLSQVKRDIARVKTVLNQQAGK.

The protein belongs to the universal ribosomal protein uL29 family.

This is Large ribosomal subunit protein uL29 from Pseudomonas aeruginosa (strain UCBPP-PA14).